A 396-amino-acid polypeptide reads, in one-letter code: Jacalin-related lectin 45 (396 aa).

Jacalin-type lectin domains are found at residues 3–138 (KKVT…KTSH), 144–264 (QFRM…NFAV), and 270–392 (VKKL…YVKP).

This sequence belongs to the jacalin lectin family.

In Arabidopsis thaliana (Mouse-ear cress), this protein is Jacalin-related lectin 45 (JAL45).